Consider the following 256-residue polypeptide: Hydroxyacylglutathione hydrolase (256 aa).

The Zn(2+) site is built by His-55, His-57, Asp-59, His-60, His-113, Asp-130, and His-168.

Belongs to the metallo-beta-lactamase superfamily. Glyoxalase II family. In terms of assembly, monomer. Zn(2+) is required as a cofactor.

The enzyme catalyses an S-(2-hydroxyacyl)glutathione + H2O = a 2-hydroxy carboxylate + glutathione + H(+). Its pathway is secondary metabolite metabolism; methylglyoxal degradation; (R)-lactate from methylglyoxal: step 2/2. Its function is as follows. Thiolesterase that catalyzes the hydrolysis of S-D-lactoyl-glutathione to form glutathione and D-lactic acid. In Psychromonas ingrahamii (strain DSM 17664 / CCUG 51855 / 37), this protein is Hydroxyacylglutathione hydrolase.